The following is a 260-amino-acid chain: Ubiquinone/menaquinone biosynthesis C-methyltransferase UbiE (260 aa).

Residues threonine 83, aspartate 104, and 132–133 (NA) contribute to the S-adenosyl-L-methionine site.

It belongs to the class I-like SAM-binding methyltransferase superfamily. MenG/UbiE family.

It catalyses the reaction a 2-demethylmenaquinol + S-adenosyl-L-methionine = a menaquinol + S-adenosyl-L-homocysteine + H(+). The catalysed reaction is a 2-methoxy-6-(all-trans-polyprenyl)benzene-1,4-diol + S-adenosyl-L-methionine = a 5-methoxy-2-methyl-3-(all-trans-polyprenyl)benzene-1,4-diol + S-adenosyl-L-homocysteine + H(+). Its pathway is quinol/quinone metabolism; menaquinone biosynthesis; menaquinol from 1,4-dihydroxy-2-naphthoate: step 2/2. It functions in the pathway cofactor biosynthesis; ubiquinone biosynthesis. Methyltransferase required for the conversion of demethylmenaquinol (DMKH2) to menaquinol (MKH2) and the conversion of 2-polyprenyl-6-methoxy-1,4-benzoquinol (DDMQH2) to 2-polyprenyl-3-methyl-6-methoxy-1,4-benzoquinol (DMQH2). The sequence is that of Ubiquinone/menaquinone biosynthesis C-methyltransferase UbiE from Bartonella tribocorum (strain CIP 105476 / IBS 506).